A 132-amino-acid polypeptide reads, in one-letter code: Small ribosomal subunit protein uS15 (132 aa).

Belongs to the universal ribosomal protein uS15 family. Part of the 30S ribosomal subunit.

The chain is Small ribosomal subunit protein uS15 from Methanobrevibacter smithii (strain ATCC 35061 / DSM 861 / OCM 144 / PS).